We begin with the raw amino-acid sequence, 454 residues long: Replicative DNA helicase DnaB (454 aa).

The segment at methionine 1–glutamate 149 is N-terminal domain (NTD). A linker helix region spans residues lysine 163–leucine 176. Residues arginine 179–phenylalanine 445 enclose the SF4 helicase domain. The tract at residues isoleucine 183–alanine 454 is C-terminal domain (CTD). 5 residues coordinate ATP: serine 213, glycine 215, lysine 216, threonine 217, and alanine 218. The active-site Nucleophile is the glutamate 241. ATP contacts are provided by arginine 250 and glutamine 362. The ssDNA site is built by arginine 381, glutamate 382, and glycine 384. Positions 418, 419, and 420 each coordinate ATP.

This sequence belongs to the helicase family. DnaB subfamily. Homohexamer. Interacts with DnaG primase, as DnaB(6):DnaG(3). Interacts with the N-terminus of DnaI (shown with DnaI of B.subtilis), forms a helicase DnaB(6):DnaI(6) complex. The DnaB-DnaI complex is disrupted by DnaD (DnaD and DnaI from B.subtilis). A stable complex DnaI(6):DnaB(6):DnaG(3) fragment can be isolated; DnaI and DnaG do not contact each other (DnaI in this complex is derived from B.subtilis). Forms a complex with DNA clamp loader protein tau (shown with B.subtilis HolA) tau(3):DnaB(6); a single ATP hydrolysis even is sufficient for complex formation.

It catalyses the reaction Couples ATP hydrolysis with the unwinding of duplex DNA at the replication fork by translocating in the 5'-3' direction. This creates two antiparallel DNA single strands (ssDNA). The leading ssDNA polymer is the template for DNA polymerase III holoenzyme which synthesizes a continuous strand.. The enzyme catalyses ATP + H2O = ADP + phosphate + H(+). The main replicative DNA helicase, it participates in initiation and elongation during chromosome replication. Travels ahead of the DNA replisome, separating double-stranded (ds)DNA into templates for DNA synthesis. Binding of single-stranded (ss)DNA to the hexamer suggests a 2-nucleotide step size for the helicase and a hand-over-hand mechanism of DNA unwinding. Has ssDNA-stimulated ATPase activity. DnaG primase stimulates the helicase activity (the helicase direction was not determine but is probably 5'-3'). Loaded onto DNA by helicase loader DnaI (shown with DnaI of B.subtilis); ATP-binding enhances loading and subsequent ATP hydrolysis dissociates the complex, leaving helicase on the DNA. Binds ssDNA and less well dsDNA, in the presence of ADPNP (probably 5'-adenylyl beta, gamma-imidodiphosphate, but not ATP) binding to both DNAs is improved. The polypeptide is Replicative DNA helicase DnaB (Geobacillus stearothermophilus (Bacillus stearothermophilus)).